A 328-amino-acid chain; its full sequence is Ornithine transcarbamylase, mitochondrial (328 aa).

A mitochondrion-targeting transit peptide spans 1 to 6 (GGQPLQ). Position 44 is an N6-acetyllysine; alternate (Lys44). Lys44 is modified (N6-succinyllysine; alternate). Lys54 bears the N6-succinyllysine mark. At Lys62 the chain carries N6-acetyllysine; alternate. An N6-succinyllysine; alternate modification is found at Lys62. 64-68 (STRTR) provides a ligand contact to carbamoyl phosphate. Ser107 is subject to Phosphoserine. Arg115 is a binding site for carbamoyl phosphate. Arg115 lines the L-ornithine pocket. Lys118 is subject to N6-acetyllysine; alternate. Residue Lys118 is modified to N6-succinyllysine; alternate. His142 is a binding site for carbamoyl phosphate. Asn173 provides a ligand contact to L-ornithine. N6-acetyllysine; alternate is present on residues Lys195, Lys205, and Lys212. N6-succinyllysine; alternate occurs at positions 195, 205, and 212. 237–241 (DTWIS) serves as a coordination point for L-ornithine. An N6-succinyllysine mark is found at Lys248 and Lys263. 276–279 (HCLP) lines the L-ornithine pocket. Cys277 is a catalytic residue. The residue at position 281 (Lys281) is an N6-acetyllysine; alternate. An N6-succinyllysine; alternate modification is found at Lys281. Residue Arg304 coordinates carbamoyl phosphate. Residue Arg304 participates in L-ornithine binding.

This sequence belongs to the aspartate/ornithine carbamoyltransferase superfamily. OTCase family. Homotrimer. In terms of processing, acetylation at Lys-62 negatively regulates ornithine carbamoyltransferase activity in response to nutrient signals.

The protein resides in the mitochondrion matrix. The enzyme catalyses carbamoyl phosphate + L-ornithine = L-citrulline + phosphate + H(+). Its pathway is nitrogen metabolism; urea cycle; L-citrulline from L-ornithine and carbamoyl phosphate: step 1/1. With respect to regulation, negatively regulated by lysine acetylation. Catalyzes the second step of the urea cycle, the condensation of carbamoyl phosphate with L-ornithine to form L-citrulline. The urea cycle ensures the detoxification of ammonia by converting it to urea for excretion. This is Ornithine transcarbamylase, mitochondrial from Sus scrofa (Pig).